The primary structure comprises 103 residues: Histone H4 (103 aa).

Positions 1-14 (MSGRGKGGKGLGKG) are enriched in gly residues. The interval 1–20 (MSGRGKGGKGLGKGGAKRHR) is disordered. Residues 17–21 (KRHRK) mediate DNA binding.

The protein belongs to the histone H4 family. In terms of assembly, the nucleosome is a histone octamer containing two molecules each of H2A, H2B, H3 and H4 assembled in one H3-H4 heterotetramer and two H2A-H2B heterodimers. The octamer wraps approximately 147 bp of DNA.

Its subcellular location is the nucleus. It is found in the chromosome. Functionally, core component of nucleosome. Nucleosomes wrap and compact DNA into chromatin, limiting DNA accessibility to the cellular machineries which require DNA as a template. Histones thereby play a central role in transcription regulation, DNA repair, DNA replication and chromosomal stability. DNA accessibility is regulated via a complex set of post-translational modifications of histones, also called histone code, and nucleosome remodeling. This Chlamydomonas reinhardtii (Chlamydomonas smithii) protein is Histone H4 (H4-I).